The primary structure comprises 80 residues: Exodeoxyribonuclease 7 small subunit (80 aa).

It belongs to the XseB family. In terms of assembly, heterooligomer composed of large and small subunits.

The protein localises to the cytoplasm. It carries out the reaction Exonucleolytic cleavage in either 5'- to 3'- or 3'- to 5'-direction to yield nucleoside 5'-phosphates.. Its function is as follows. Bidirectionally degrades single-stranded DNA into large acid-insoluble oligonucleotides, which are then degraded further into small acid-soluble oligonucleotides. The protein is Exodeoxyribonuclease 7 small subunit of Photobacterium profundum (strain SS9).